Consider the following 335-residue polypeptide: Acetyl-coenzyme A carboxylase carboxyl transferase subunit alpha (335 aa).

Positions Gln-40–Thr-294 constitute a CoA carboxyltransferase C-terminal domain.

Belongs to the AccA family. As to quaternary structure, acetyl-CoA carboxylase is a heterohexamer composed of biotin carboxyl carrier protein (AccB), biotin carboxylase (AccC) and two subunits each of ACCase subunit alpha (AccA) and ACCase subunit beta (AccD).

It localises to the cytoplasm. It catalyses the reaction N(6)-carboxybiotinyl-L-lysyl-[protein] + acetyl-CoA = N(6)-biotinyl-L-lysyl-[protein] + malonyl-CoA. The protein operates within lipid metabolism; malonyl-CoA biosynthesis; malonyl-CoA from acetyl-CoA: step 1/1. Functionally, component of the acetyl coenzyme A carboxylase (ACC) complex. First, biotin carboxylase catalyzes the carboxylation of biotin on its carrier protein (BCCP) and then the CO(2) group is transferred by the carboxyltransferase to acetyl-CoA to form malonyl-CoA. The sequence is that of Acetyl-coenzyme A carboxylase carboxyl transferase subunit alpha from Prochlorococcus marinus (strain MIT 9312).